A 182-amino-acid polypeptide reads, in one-letter code: MAARLKEKFIKEIRPALQKELGLENTMAVPRIEKIVLNMGLGEATQNSKLLDPLVADLAAIAGQKPVTTRAKKSIAAFKVREGMPIGAMVTLRGDTMYEFLDRLISVGLPRVRDFRGVSTKSFDGRGNYTLGVRDQLIFPEIDISKVEKLKGMNITIVTTAQDDNSARALLKQFGVPFRQTA.

It belongs to the universal ribosomal protein uL5 family. As to quaternary structure, part of the 50S ribosomal subunit; part of the 5S rRNA/L5/L18/L25 subcomplex. Contacts the 5S rRNA and the P site tRNA. Forms a bridge to the 30S subunit in the 70S ribosome.

In terms of biological role, this is one of the proteins that bind and probably mediate the attachment of the 5S RNA into the large ribosomal subunit, where it forms part of the central protuberance. In the 70S ribosome it contacts protein S13 of the 30S subunit (bridge B1b), connecting the 2 subunits; this bridge is implicated in subunit movement. Contacts the P site tRNA; the 5S rRNA and some of its associated proteins might help stabilize positioning of ribosome-bound tRNAs. In Acidobacterium capsulatum (strain ATCC 51196 / DSM 11244 / BCRC 80197 / JCM 7670 / NBRC 15755 / NCIMB 13165 / 161), this protein is Large ribosomal subunit protein uL5.